The chain runs to 187 residues: BLOC-1-related complex subunit 8 homolog (187 aa).

The interval 165-187 is disordered; sequence QSQHETANDTRQGYNDDANNDQD.

It belongs to the BORCS8 family.

The protein resides in the lysosome membrane. In terms of biological role, may participate in the coupling of lysosomes to microtubule plus-end-directed kinesin motor. This Nematostella vectensis (Starlet sea anemone) protein is BLOC-1-related complex subunit 8 homolog.